Consider the following 220-residue polypeptide: Ribonuclease HII (220 aa).

Residues 32–220 (KHIAGIDEAG…FAPIKGCFDC (189 aa)) enclose the RNase H type-2 domain. Residues aspartate 38, glutamate 39, and aspartate 130 each coordinate a divalent metal cation.

The protein belongs to the RNase HII family. It depends on Mn(2+) as a cofactor. Mg(2+) serves as cofactor.

It localises to the cytoplasm. It catalyses the reaction Endonucleolytic cleavage to 5'-phosphomonoester.. Endonuclease that specifically degrades the RNA of RNA-DNA hybrids. The chain is Ribonuclease HII from Brucella abortus (strain 2308).